A 926-amino-acid polypeptide reads, in one-letter code: MSDLEAEYRLDYFEEEGFERKECPSCGAHFWTRDADRELCGEPPCEDYSFIDDPGFPEAYSLSEMREAFLSFFEEHGHERIDPYPVAANRWRDDVLLTQASIYDFQPLVTSGQTPPPANPLTISQPCIRMQDIDNVGKTGRHTMAFEMMAHHAFNTREEVAEDEYAYHGEVYWKDETVEYCDKLFESLGADLEDITYIEDPWVGGGNAGPAIEVIYKGAELATLVFMCMERDPDGDYEMKDGHTYSFMDTYIVDTGYGLERWTWMSQGTATVYEAVYPDAIDFLKENAGIEHTEAEQKLVHRAAKLSGRLDIDDVDDVEAARGEIADRLDVDVNRLRELVEPLESIYAIADHSRTLAYMFGDGIVPSNVGTGYLARMVLRRTKRLVDEIGIDAPLDELVDMQAERLGYENRDTIREIVRTEERKYRKTLERGSRKVESLADEYAGTDEPIPTEVLLELYDSHGIQPDMVADIAAERGATVDVPDDFYALVADRHEEADGDEAAAERDDRFDDLPETEKLFYDDQGRTEFEAVVLDVFELEEGYDVVLDQTMFYPEGGGQPADRGQLTAGETTVDVVDVQERNGVVLHRTDADPGKGEFVRGQVDGDRRDRLRAHHTATHLIGHAAREVLGNHVRQAGAQKGIDSSRLDIRHFERITREQVKEIERVANALVRDDVPVRQEWPDRNEAESEHGFDLYQGGVPPGTNIRLIHVGDEDVQACAGTHVERTGEIGAVKVLKTEPVQDGVERIVFAAGGAAVEATQRTEDALYDAARALDVDPLDVPETAERFFEEWKGRGKEIESLKEELAAARASGGADAEEVEIGGVTAVIQRLDGDADELRATANAHVDDGKVAVVGSGADGSASFVVGVPDGVDVNAGQVVSELAARVGGGGGGPPDFAQGGGPDADALDDALDAAPDVLRSLQEA.

The Zn(2+) site is built by histidine 615, histidine 619, cysteine 719, and histidine 723. Positions 887 to 910 (RVGGGGGGPPDFAQGGGPDADALD) are disordered. Residues 888–904 (VGGGGGGPPDFAQGGGP) are compositionally biased toward gly residues.

It belongs to the class-II aminoacyl-tRNA synthetase family. Requires Zn(2+) as cofactor.

It localises to the cytoplasm. It catalyses the reaction tRNA(Ala) + L-alanine + ATP = L-alanyl-tRNA(Ala) + AMP + diphosphate. Its function is as follows. Catalyzes the attachment of alanine to tRNA(Ala) in a two-step reaction: alanine is first activated by ATP to form Ala-AMP and then transferred to the acceptor end of tRNA(Ala). Also edits incorrectly charged Ser-tRNA(Ala) and Gly-tRNA(Ala) via its editing domain. This is Alanine--tRNA ligase from Halorubrum lacusprofundi (strain ATCC 49239 / DSM 5036 / JCM 8891 / ACAM 34).